We begin with the raw amino-acid sequence, 247 residues long: PF03932 family protein CutC (247 aa).

This sequence belongs to the CutC family.

It localises to the cytoplasm. This is PF03932 family protein CutC from Chromobacterium violaceum (strain ATCC 12472 / DSM 30191 / JCM 1249 / CCUG 213 / NBRC 12614 / NCIMB 9131 / NCTC 9757 / MK).